Reading from the N-terminus, the 415-residue chain is Zona pellucida-like domain-containing protein 1 (415 aa).

The first 19 residues, 1 to 19 (MEQIRLLLLLTIRVLSGSA), serve as a signal peptide directing secretion. At 20–372 (QFNGYNCDAN…PPFQLNAITS (353 aa)) the chain is on the extracellular side. Residues 43–320 (YCGVQAITMK…PICSHRERRD (278 aa)) form the ZP domain. Cystine bridges form between Cys-44–Cys-155 and Cys-79–Cys-104. An N-linked (GlcNAc...) asparagine glycan is attached at Asn-164. 2 disulfides stabilise this stretch: Cys-235–Cys-296 and Cys-255–Cys-313. The disordered stretch occupies residues 323-359 (RRTTWSSQSSSGSAVLSAGPIITRSDETPTNNSQLGS). Over residues 328 to 339 (SSQSSSGSAVLS) the composition is skewed to low complexity. The segment covering 350-359 (TPTNNSQLGS) has biased composition (polar residues). The chain crosses the membrane as a helical span at residues 373–393 (ALISGMVILGVMSFSLLVCPL). Over 394 to 415 (ALLHRKGPTSLVLNGIRNPVFD) the chain is Cytoplasmic.

In terms of processing, proteolytically cleaved before the transmembrane segment to yield the secreted form found in the extracellular matrix of the cupula.

The protein resides in the cytoplasmic vesicle membrane. It localises to the secreted. The protein localises to the extracellular space. Its subcellular location is the extracellular matrix. Its function is as follows. Glycoprotein which is a component of the gelatinous extracellular matrix in the cupulae of the vestibular organ. This Macaca fascicularis (Crab-eating macaque) protein is Zona pellucida-like domain-containing protein 1 (ZPLD1).